Here is a 154-residue protein sequence, read N- to C-terminus: Ascorbate-specific PTS system EIIA component (154 aa).

One can recognise a PTS EIIA type-2 domain in the interval 6 to 150 (SLAENNSIRL…QEVLDLIDRT (145 aa)). Residue histidine 68 is the Tele-phosphohistidine intermediate of the active site. Histidine 68 bears the Phosphohistidine mark.

The protein resides in the cytoplasm. Its function is as follows. The phosphoenolpyruvate-dependent sugar phosphotransferase system (sugar PTS), a major carbohydrate active transport system, catalyzes the phosphorylation of incoming sugar substrates concomitantly with their translocation across the cell membrane. The enzyme II UlaABC PTS system is involved in ascorbate transport. The sequence is that of Ascorbate-specific PTS system EIIA component (ulaC) from Salmonella choleraesuis (strain SC-B67).